The primary structure comprises 321 residues: tRNA(Ile)-lysidine synthase (321 aa).

ATP is bound at residue 20–25 (SGGADS).

Belongs to the tRNA(Ile)-lysidine synthase family.

It is found in the cytoplasm. It catalyses the reaction cytidine(34) in tRNA(Ile2) + L-lysine + ATP = lysidine(34) in tRNA(Ile2) + AMP + diphosphate + H(+). Its function is as follows. Ligates lysine onto the cytidine present at position 34 of the AUA codon-specific tRNA(Ile) that contains the anticodon CAU, in an ATP-dependent manner. Cytidine is converted to lysidine, thus changing the amino acid specificity of the tRNA from methionine to isoleucine. The chain is tRNA(Ile)-lysidine synthase from Bordetella pertussis (strain Tohama I / ATCC BAA-589 / NCTC 13251).